A 1693-amino-acid polypeptide reads, in one-letter code: Serine protease filzig (1693 aa).

Over methionine 1 to glutamine 47 the chain is Cytoplasmic. A helical; Signal-anchor for type II membrane protein transmembrane segment spans residues leucine 48 to serine 68. Over glycine 69–lysine 1693 the chain is Extracellular. Disordered regions lie at residues glutamine 170 to serine 198, glutamine 212 to phenylalanine 321, glycine 352 to glycine 465, and serine 477 to serine 524. 2 stretches are compositionally biased toward polar residues: residues phenylalanine 178–serine 198 and glutamine 212–proline 222. Composition is skewed to low complexity over residues glutamate 230–glutamate 241 and threonine 252–serine 268. Positions glutamate 274–proline 294 are enriched in polar residues. 3 stretches are compositionally biased toward low complexity: residues serine 358–lysine 404, glutamine 422–proline 431, and glutamate 488–glutamine 501. Over residues serine 502–serine 524 the composition is skewed to polar residues. 2 N-linked (GlcNAc...) asparagine glycosylation sites follow: asparagine 541 and asparagine 582. 3 disordered regions span residues glutamine 615–glycine 635, histidine 752–threonine 1007, and tyrosine 1057–isoleucine 1090. The segment covering serine 771–tyrosine 799 has biased composition (polar residues). The span at proline 836 to valine 847 shows a compositional bias: basic residues. Composition is skewed to polar residues over residues glutamine 951 to tyrosine 962 and lysine 989 to serine 1000. N-linked (GlcNAc...) asparagine glycans are attached at residues asparagine 1215 and asparagine 1272. Composition is skewed to low complexity over residues proline 1297–lysine 1307, threonine 1331–arginine 1353, and arginine 1362–arginine 1376. A disordered region spans residues proline 1297–serine 1435. A compositionally biased stretch (acidic residues) spans aspartate 1380–valine 1391. One can recognise a Peptidase S1 domain in the interval isoleucine 1449–glycine 1691. Cysteine 1480 and cysteine 1496 are disulfide-bonded. Active-site charge relay system residues include histidine 1495 and aspartate 1544. Cystine bridges form between cysteine 1608-cysteine 1627 and cysteine 1638-cysteine 1667. The active-site Charge relay system is the serine 1642.

This sequence belongs to the peptidase S1 family.

It localises to the cell membrane. In terms of biological role, probable endopeptidase. In tracheal terminal cells, acts downstream of ich to regulate seamless tube growth and/or maintenance probably by processing lumenal matrix proteins. The chain is Serine protease filzig from Drosophila melanogaster (Fruit fly).